Here is a 444-residue protein sequence, read N- to C-terminus: MRKVKPKLNLTSQTARIVNLSHDGRGIARINGKATFIQGALPGEVVEFQYTRVKKDFDEGKLLSIVEPSTLRVEPKCPHYQMCGGCSLQHMSAEEQIRFKQSHLLDLLSRYGHTAPQTVLSPLTSHPWNYRNKARLSTRFVEKKQSTMVGFRERNNPRFITEINQCPILNSKIDTDIVHLRKLIDTMEDKQCIAQIEVAAGDNEVALIFRNLTPLTEQDESKIRKFAQQFQYKVFLQPGGLDSVFCFYPSDAHAYLSYELPDYQITFQFHPNDFTQVNAELNRKMVKQAIQLMELKNSDIVLDLFCGLGNFSLPMAKHCSRVIGVEGNRNMVERAYMNAKSNHITNVDFYAANLDDVMEVRNLVNTSFSKVLIDPPRSGALEIVKQIDSIDPERIVYVSCNPITLARDTDILVNQKGYVLITAGVMDMFPHTAHVESIALFQKG.

Positions 5 to 64 (KPKLNLTSQTARIVNLSHDGRGIARINGKATFIQGALPGEVVEFQYTRVKKDFDEGKLLS) constitute a TRAM domain. The [4Fe-4S] cluster site is built by C77, C83, C86, and C166. Residues Q276, F305, N310, E326, N353, and D374 each coordinate S-adenosyl-L-methionine. C400 functions as the Nucleophile in the catalytic mechanism.

This sequence belongs to the class I-like SAM-binding methyltransferase superfamily. RNA M5U methyltransferase family. RlmD subfamily.

The catalysed reaction is uridine(1939) in 23S rRNA + S-adenosyl-L-methionine = 5-methyluridine(1939) in 23S rRNA + S-adenosyl-L-homocysteine + H(+). Catalyzes the formation of 5-methyl-uridine at position 1939 (m5U1939) in 23S rRNA. This Legionella pneumophila (strain Lens) protein is 23S rRNA (uracil(1939)-C(5))-methyltransferase RlmD.